The following is a 501-amino-acid chain: Glycogen synthase 1 (501 aa).

K18 contributes to the ADP-alpha-D-glucose binding site.

The protein belongs to the glycosyltransferase 1 family. Bacterial/plant glycogen synthase subfamily.

It carries out the reaction [(1-&gt;4)-alpha-D-glucosyl](n) + ADP-alpha-D-glucose = [(1-&gt;4)-alpha-D-glucosyl](n+1) + ADP + H(+). It participates in glycan biosynthesis; glycogen biosynthesis. Synthesizes alpha-1,4-glucan chains using ADP-glucose. In Geobacter sulfurreducens (strain ATCC 51573 / DSM 12127 / PCA), this protein is Glycogen synthase 1.